The sequence spans 203 residues: NADH-quinone oxidoreductase subunit C (203 aa).

Belongs to the complex I 30 kDa subunit family. NDH-1 is composed of 14 different subunits. Subunits NuoB, C, D, E, F, and G constitute the peripheral sector of the complex.

It localises to the cell inner membrane. It carries out the reaction a quinone + NADH + 5 H(+)(in) = a quinol + NAD(+) + 4 H(+)(out). NDH-1 shuttles electrons from NADH, via FMN and iron-sulfur (Fe-S) centers, to quinones in the respiratory chain. The immediate electron acceptor for the enzyme in this species is believed to be ubiquinone. Couples the redox reaction to proton translocation (for every two electrons transferred, four hydrogen ions are translocated across the cytoplasmic membrane), and thus conserves the redox energy in a proton gradient. The sequence is that of NADH-quinone oxidoreductase subunit C from Bartonella tribocorum (strain CIP 105476 / IBS 506).